Consider the following 96-residue polypeptide: Co-chaperonin GroES (96 aa).

The protein belongs to the GroES chaperonin family. As to quaternary structure, heptamer of 7 subunits arranged in a ring. Interacts with the chaperonin GroEL.

It localises to the cytoplasm. Together with the chaperonin GroEL, plays an essential role in assisting protein folding. The GroEL-GroES system forms a nano-cage that allows encapsulation of the non-native substrate proteins and provides a physical environment optimized to promote and accelerate protein folding. GroES binds to the apical surface of the GroEL ring, thereby capping the opening of the GroEL channel. This Aromatoleum aromaticum (strain DSM 19018 / LMG 30748 / EbN1) (Azoarcus sp. (strain EbN1)) protein is Co-chaperonin GroES.